We begin with the raw amino-acid sequence, 92 residues long: MYKFKRSFRRRLSPIGSGNLIYYRNMSLISRFISEQGKILSRRVNRLTLKQQRLITIAIKQARILSLLPFINNEKQFERIESITRVKGFIKK.

This sequence belongs to the bacterial ribosomal protein bS18 family. In terms of assembly, part of the 30S ribosomal subunit.

It is found in the plastid. The chain is Small ribosomal subunit protein bS18c (rps18) from Epifagus virginiana (Beechdrops).